The following is a 98-amino-acid chain: Keratin-associated protein 3-3 (98 aa).

Ala-2 is subject to N-acetylalanine. 3 consecutive repeat copies span residues 3-7 (CCAPL), 8-12 (CCSAR), and 47-51 (CCDNC). A 3 X 5 AA repeats of C-C-X(3) region spans residues 3–59 (CCAPLCCSARTSPATTICSSDKFCRCGVCLPSTCPHTVWLLEPTCCDNCPPPCHIPQ).

It belongs to the KRTAP type 3 family. Interacts with hair keratins.

Its function is as follows. In the hair cortex, hair keratin intermediate filaments are embedded in an interfilamentous matrix, consisting of hair keratin-associated proteins (KRTAP), which are essential for the formation of a rigid and resistant hair shaft through their extensive disulfide bond cross-linking with abundant cysteine residues of hair keratins. The matrix proteins include the high-sulfur and high-glycine-tyrosine keratins. The protein is Keratin-associated protein 3-3 of Bos taurus (Bovine).